The sequence spans 261 residues: Indole-3-glycerol phosphate synthase (261 aa).

The protein belongs to the TrpC family.

The enzyme catalyses 1-(2-carboxyphenylamino)-1-deoxy-D-ribulose 5-phosphate + H(+) = (1S,2R)-1-C-(indol-3-yl)glycerol 3-phosphate + CO2 + H2O. It participates in amino-acid biosynthesis; L-tryptophan biosynthesis; L-tryptophan from chorismate: step 4/5. The protein is Indole-3-glycerol phosphate synthase of Burkholderia multivorans (strain ATCC 17616 / 249).